The primary structure comprises 121 residues: Prefoldin subunit beta (121 aa).

Belongs to the prefoldin subunit beta family. In terms of assembly, heterohexamer of two alpha and four beta subunits.

The protein localises to the cytoplasm. Molecular chaperone capable of stabilizing a range of proteins. Seems to fulfill an ATP-independent, HSP70-like function in archaeal de novo protein folding. This is Prefoldin subunit beta from Methanosphaerula palustris (strain ATCC BAA-1556 / DSM 19958 / E1-9c).